The primary structure comprises 102 residues: Nucleoid-associated protein WS1681 (102 aa).

This sequence belongs to the YbaB/EbfC family. Homodimer.

The protein resides in the cytoplasm. It is found in the nucleoid. Binds to DNA and alters its conformation. May be involved in regulation of gene expression, nucleoid organization and DNA protection. This chain is Nucleoid-associated protein WS1681, found in Wolinella succinogenes (strain ATCC 29543 / DSM 1740 / CCUG 13145 / JCM 31913 / LMG 7466 / NCTC 11488 / FDC 602W) (Vibrio succinogenes).